Reading from the N-terminus, the 573-residue chain is N(2)-(2-carboxyethyl)arginine synthase (573 aa).

Substrate contacts are provided by Tyr271 and Asp301. 410-413 (IGFF) lines the thiamine diphosphate pocket. 414-415 (RH) lines the substrate pocket. 436–438 (SSF) contacts thiamine diphosphate. Residue Asp463 participates in Mg(2+) binding. Thiamine diphosphate contacts are provided by residues 464–465 (GG), 490–495 (NDTNGL), and Tyr561. Residues Asn490 and Thr492 each contribute to the Mg(2+) site. Substrate is bound at residue Leu571.

Homotetramer; dimer of dimers. Mg(2+) is required as a cofactor. Requires thiamine diphosphate as cofactor.

The catalysed reaction is D-glyceraldehyde 3-phosphate + L-arginine = N(2)-(2-carboxyethyl)-L-arginine + phosphate + H(+). Involved in the biosynthesis of the beta-lactamase inhibitor, clavulanic acid. Catalyzes the thiamine diphosphate (ThDP) dependent condensation of D-glyceraldehyde-3-phosphate (D-G3P) with L-arginine to yield the beta-amino acid, N2-(2-carboxyethyl)arginine (CEA) via a beta-elimination resulting in the formation of an enol which undergoes a second elimination to generate the alpha,beta-unsaturated acryloyl-ThDP. This chain is N(2)-(2-carboxyethyl)arginine synthase, found in Streptomyces clavuligerus.